The chain runs to 358 residues: UDP-N-acetylglucosamine--N-acetylmuramyl-(pentapeptide) pyrophosphoryl-undecaprenol N-acetylglucosamine transferase (358 aa).

UDP-N-acetyl-alpha-D-glucosamine contacts are provided by residues 11–13 (TGG), Asn-122, Arg-161, Ser-189, Ile-243, 262–267 (ALTVCE), and Gln-288.

Belongs to the glycosyltransferase 28 family. MurG subfamily.

Its subcellular location is the cell inner membrane. The enzyme catalyses di-trans,octa-cis-undecaprenyl diphospho-N-acetyl-alpha-D-muramoyl-L-alanyl-D-glutamyl-meso-2,6-diaminopimeloyl-D-alanyl-D-alanine + UDP-N-acetyl-alpha-D-glucosamine = di-trans,octa-cis-undecaprenyl diphospho-[N-acetyl-alpha-D-glucosaminyl-(1-&gt;4)]-N-acetyl-alpha-D-muramoyl-L-alanyl-D-glutamyl-meso-2,6-diaminopimeloyl-D-alanyl-D-alanine + UDP + H(+). It functions in the pathway cell wall biogenesis; peptidoglycan biosynthesis. In terms of biological role, cell wall formation. Catalyzes the transfer of a GlcNAc subunit on undecaprenyl-pyrophosphoryl-MurNAc-pentapeptide (lipid intermediate I) to form undecaprenyl-pyrophosphoryl-MurNAc-(pentapeptide)GlcNAc (lipid intermediate II). This chain is UDP-N-acetylglucosamine--N-acetylmuramyl-(pentapeptide) pyrophosphoryl-undecaprenol N-acetylglucosamine transferase, found in Coxiella burnetii (strain CbuK_Q154) (Coxiella burnetii (strain Q154)).